A 243-amino-acid polypeptide reads, in one-letter code: Probable enoyl-CoA hydratase echA6 (243 aa).

The protein belongs to the enoyl-CoA hydratase/isomerase family.

It carries out the reaction a (3S)-3-hydroxyacyl-CoA = a (2E)-enoyl-CoA + H2O. It catalyses the reaction a 4-saturated-(3S)-3-hydroxyacyl-CoA = a (3E)-enoyl-CoA + H2O. Functionally, could possibly oxidize fatty acids using specific components. This chain is Probable enoyl-CoA hydratase echA6 (echA6), found in Mycobacterium bovis (strain ATCC BAA-935 / AF2122/97).